A 211-amino-acid polypeptide reads, in one-letter code: 3-demethoxyubiquinol 3-hydroxylase (211 aa).

Fe cation is bound by residues E60, E90, H93, E142, E174, and H177.

Belongs to the COQ7 family. It depends on Fe cation as a cofactor.

The protein resides in the cell membrane. The catalysed reaction is a 5-methoxy-2-methyl-3-(all-trans-polyprenyl)benzene-1,4-diol + AH2 + O2 = a 3-demethylubiquinol + A + H2O. It participates in cofactor biosynthesis; ubiquinone biosynthesis. Functionally, catalyzes the hydroxylation of 2-nonaprenyl-3-methyl-6-methoxy-1,4-benzoquinol during ubiquinone biosynthesis. The protein is 3-demethoxyubiquinol 3-hydroxylase of Herminiimonas arsenicoxydans.